The following is an 80-amino-acid chain: Progonadoliberin-1 (80 aa).

The first 21 residues, 1-21, serve as a signal peptide directing secretion; the sequence is MGIKRALWWMVVCVVVLQVSA. Residue Gln-22 is modified to Pyrrolidone carboxylic acid. Gly-31 is subject to Glycine amide.

This sequence belongs to the GnRH family.

The protein resides in the secreted. Functionally, stimulates the secretion of gonadotropins. This Clarias gariepinus (North African catfish) protein is Progonadoliberin-1 (gnrh1).